A 231-amino-acid chain; its full sequence is MVSFTTILVAATAALVAANPVPPSIDEMREIYVKSRDLHARGGTPSSTGTHDGFYYSWWTDNGAQATYTNNAGGSYSITWSGNGNLVGGKGWNPGSARNVTYSANYRPNGNSYLSVYGWTRNPLVEYYVVENFGTYDPSSQASRKGTINVDGATYQVAQSTRTNQPSIDGTRTFQQYWSVRQQKRSSGTVDMKKHFDAWASMGMKLGTHDYQIVATEGYFSSGSSTVTIQR.

Residues 1 to 18 (MVSFTTILVAATAALVAA) form the signal peptide. The region spanning 42–230 (GGTPSSTGTH…SSGSSTVTIQ (189 aa)) is the GH11 domain. An N-linked (GlcNAc...) asparagine glycan is attached at asparagine 99. Glutamate 126 acts as the Nucleophile in catalysis. Glutamate 217 (proton donor) is an active-site residue.

Belongs to the glycosyl hydrolase 11 (cellulase G) family.

The protein resides in the secreted. It catalyses the reaction Endohydrolysis of (1-&gt;4)-beta-D-xylosidic linkages in xylans.. The protein operates within glycan degradation; xylan degradation. Functionally, endo-1,4-beta-xylanase involved in the hydrolysis of xylan, a major structural heterogeneous polysaccharide found in plant biomass representing the second most abundant polysaccharide in the biosphere, after cellulose. The polypeptide is Endo-1,4-beta-xylanase 4 (XYL4) (Pyricularia grisea (Crabgrass-specific blast fungus)).